The sequence spans 429 residues: MAMRIRIDLPQDEIPAQWYNILPDLPEELPPPQDPTGKSLELLKEVLPSKVLELEFAKERYVKIPDEVLERYLQVGRPTPIIRAKRLEEYLGNNIKIYLKMESYTYTGSHKINSALAHVYYAKLDNAKFVTTETGAGQWGSSVALASALFRMKAHIFMVRTSYYAKPYRKYMMQMYGAEVHPSPSDLTEFGRQLLAKDSNHPGSLGIAISDAVEYAHKNGGKYVVGSVVNSDIMFKTIAGMEAKKQMELIGEDPDYIIGVVGGGSNYAALAYPFLGDELRSGKVRRKYIASGSSEVPKMTKGVYKYDYPDTAKLLPMLKMYTIGSDFVPPPVYAGGLRYHGVAPTLSLLISKGIVQARDYSQEESFKWAKLFSELEGYIPAPETSHALPILAEIAEEAKKSGERKTVLVSFSGHGLLDLGNYASVLFKE.

N6-(pyridoxal phosphate)lysine is present on Lys111.

This sequence belongs to the TrpB family. Tetramer of two alpha and two beta chains. Pyridoxal 5'-phosphate serves as cofactor.

The enzyme catalyses (1S,2R)-1-C-(indol-3-yl)glycerol 3-phosphate + L-serine = D-glyceraldehyde 3-phosphate + L-tryptophan + H2O. Its pathway is amino-acid biosynthesis; L-tryptophan biosynthesis; L-tryptophan from chorismate: step 5/5. Functionally, the beta subunit is responsible for the synthesis of L-tryptophan from indole and L-serine. The chain is Tryptophan synthase beta chain 2 (trpB2) from Saccharolobus solfataricus (strain ATCC 35092 / DSM 1617 / JCM 11322 / P2) (Sulfolobus solfataricus).